Consider the following 932-residue polypeptide: 2-oxoglutarate dehydrogenase E1 component (932 aa).

This sequence belongs to the alpha-ketoglutarate dehydrogenase family. As to quaternary structure, homodimer. Part of the 2-oxoglutarate dehydrogenase (OGDH) complex composed of E1 (2-oxoglutarate dehydrogenase), E2 (dihydrolipoamide succinyltransferase) and E3 (dihydrolipoamide dehydrogenase); the complex contains multiple copies of the three enzymatic components (E1, E2 and E3). Requires thiamine diphosphate as cofactor.

The enzyme catalyses N(6)-[(R)-lipoyl]-L-lysyl-[protein] + 2-oxoglutarate + H(+) = N(6)-[(R)-S(8)-succinyldihydrolipoyl]-L-lysyl-[protein] + CO2. E1 component of the 2-oxoglutarate dehydrogenase (OGDH) complex which catalyzes the decarboxylation of 2-oxoglutarate, the first step in the conversion of 2-oxoglutarate to succinyl-CoA and CO(2). This Staphylococcus aureus (strain MW2) protein is 2-oxoglutarate dehydrogenase E1 component.